The sequence spans 214 residues: Probable septum site-determining protein MinC (214 aa).

The protein belongs to the MinC family. As to quaternary structure, interacts with MinD and FtsZ.

In terms of biological role, cell division inhibitor that blocks the formation of polar Z ring septums. Rapidly oscillates between the poles of the cell to destabilize FtsZ filaments that have formed before they mature into polar Z rings. Prevents FtsZ polymerization. The polypeptide is Probable septum site-determining protein MinC (Thermoanaerobacter pseudethanolicus (strain ATCC 33223 / 39E) (Clostridium thermohydrosulfuricum)).